Reading from the N-terminus, the 447-residue chain is Tubulin beta chain (447 aa).

Residues Gln11, Glu69, Ser138, Gly142, Thr143, Gly144, Asn204, and Asn226 each coordinate GTP. Residue Glu69 participates in Mg(2+) binding. The disordered stretch occupies residues 424-447 (QYQEARSTDSDEYDNEEYYNQQEE). The segment covering 433 to 447 (SDEYDNEEYYNQQEE) has biased composition (acidic residues).

This sequence belongs to the tubulin family. As to quaternary structure, dimer of alpha and beta chains. A typical microtubule is a hollow water-filled tube with an outer diameter of 25 nm and an inner diameter of 15 nM. Alpha-beta heterodimers associate head-to-tail to form protofilaments running lengthwise along the microtubule wall with the beta-tubulin subunit facing the microtubule plus end conferring a structural polarity. Microtubules usually have 13 protofilaments but different protofilament numbers can be found in some organisms and specialized cells. Mg(2+) serves as cofactor. In terms of tissue distribution, lens specific.

It is found in the cytoplasm. The protein resides in the cytoskeleton. Its function is as follows. Tubulin is the major constituent of microtubules, a cylinder consisting of laterally associated linear protofilaments composed of alpha- and beta-tubulin heterodimers. Microtubules grow by the addition of GTP-tubulin dimers to the microtubule end, where a stabilizing cap forms. Below the cap, tubulin dimers are in GDP-bound state, owing to GTPase activity of alpha-tubulin. This chain is Tubulin beta chain, found in Enteroctopus dofleini (North Pacific giant octopus).